The primary structure comprises 469 residues: Adenosylhomocysteinase (469 aa).

Substrate contacts are provided by threonine 63, aspartate 139, and glutamate 164. 165–167 (TTT) contacts NAD(+). Lysine 194 and aspartate 198 together coordinate substrate. Residues asparagine 199, 228–233 (GYGDVG), glutamate 251, asparagine 300, 321–323 (IGH), and asparagine 375 each bind NAD(+).

It belongs to the adenosylhomocysteinase family. It depends on NAD(+) as a cofactor.

The protein resides in the cytoplasm. The enzyme catalyses S-adenosyl-L-homocysteine + H2O = L-homocysteine + adenosine. The protein operates within amino-acid biosynthesis; L-homocysteine biosynthesis; L-homocysteine from S-adenosyl-L-homocysteine: step 1/1. Functionally, may play a key role in the regulation of the intracellular concentration of adenosylhomocysteine. In Pseudomonas syringae pv. tomato (strain ATCC BAA-871 / DC3000), this protein is Adenosylhomocysteinase.